A 433-amino-acid polypeptide reads, in one-letter code: Serine hydroxymethyltransferase (433 aa).

(6S)-5,6,7,8-tetrahydrofolate-binding positions include Leu121 and Gly125–Ile127. Lys231 carries the post-translational modification N6-(pyridoxal phosphate)lysine.

This sequence belongs to the SHMT family. As to quaternary structure, homodimer. Pyridoxal 5'-phosphate serves as cofactor.

The protein localises to the cytoplasm. The protein operates within amino-acid biosynthesis; glycine biosynthesis; glycine from L-serine: step 1/1. Functionally, catalyzes the reversible interconversion of serine and glycine with a modified folate serving as the one-carbon carrier. Also exhibits a pteridine-independent aldolase activity toward beta-hydroxyamino acids, producing glycine and aldehydes, via a retro-aldol mechanism. The polypeptide is Serine hydroxymethyltransferase (Picrophilus torridus (strain ATCC 700027 / DSM 9790 / JCM 10055 / NBRC 100828 / KAW 2/3)).